A 101-amino-acid chain; its full sequence is Large ribosomal subunit protein uL23 (101 aa).

It belongs to the universal ribosomal protein uL23 family. Part of the 50S ribosomal subunit. Contacts protein L29, and trigger factor when it is bound to the ribosome.

In terms of biological role, one of the early assembly proteins it binds 23S rRNA. One of the proteins that surrounds the polypeptide exit tunnel on the outside of the ribosome. Forms the main docking site for trigger factor binding to the ribosome. The sequence is that of Large ribosomal subunit protein uL23 from Haemophilus ducreyi (strain 35000HP / ATCC 700724).